Consider the following 648-residue polypeptide: Exoribonuclease 2 (648 aa).

Residues 191–518 (RIDLTYLDFI…INHRLIKSII (328 aa)) form the RNB domain. Residues 565-647 (KKKYQANIID…GNKKIIATMI (83 aa)) form the S1 motif domain.

This sequence belongs to the RNR ribonuclease family. RNase II subfamily.

The protein resides in the cytoplasm. It catalyses the reaction Exonucleolytic cleavage in the 3'- to 5'-direction to yield nucleoside 5'-phosphates.. Involved in mRNA degradation. Hydrolyzes single-stranded polyribonucleotides processively in the 3' to 5' direction. The polypeptide is Exoribonuclease 2 (Buchnera aphidicola subsp. Cinara cedri (strain Cc)).